A 249-amino-acid chain; its full sequence is Anamorsin homolog (249 aa).

Residues 1–130 (MEQFKDLQKS…ETGSAARLSF (130 aa)) are N-terminal SAM-like domain. Residues 131–161 (AKKAAGVNVWKISGDDEELIDEEDLLDEADK) are linker. [2Fe-2S] cluster is bound by residues C172, C181, C184, and C186. The tract at residues 172–186 (CSTTGKRKACKNCSC) is fe-S binding site A. Residues C210, C213, C221, and C224 each contribute to the [4Fe-4S] cluster site. 2 short sequence motifs (cx2C motif) span residues 210-213 (CGNC) and 221-224 (CSTC). The interval 210–224 (CGNCYLGDAFRCSTC) is fe-S binding site B.

The protein belongs to the anamorsin family. As to quaternary structure, monomer. [2Fe-2S] cluster is required as a cofactor. It depends on [4Fe-4S] cluster as a cofactor.

Its subcellular location is the cytoplasm. The protein localises to the mitochondrion intermembrane space. Component of the cytosolic iron-sulfur (Fe-S) protein assembly (CIA) machinery. Required for the maturation of extramitochondrial Fe-S proteins. Part of an electron transfer chain functioning in an early step of cytosolic Fe-S biogenesis, facilitating the de novo assembly of a [4Fe-4S] cluster on the cytosolic Fe-S scaffold complex. Electrons are transferred from NADPH via a FAD- and FMN-containing diflavin oxidoreductase. Together with the diflavin oxidoreductase, also required for the assembly of the diferric tyrosyl radical cofactor of ribonucleotide reductase (RNR), probably by providing electrons for reduction during radical cofactor maturation in the catalytic small subunit. In Drosophila grimshawi (Hawaiian fruit fly), this protein is Anamorsin homolog.